Here is a 513-residue protein sequence, read N- to C-terminus: MQLNPSEISELIKSKIEGLSVTSEFRTQGTIVSLTDGIVRVHGLSDVMQGEMLEFPGGTFGLALNLERDSVGAVILGAYEHLKEGDIVKCTSRILEVPVGEALLGRVVNALGQPIDGKGPIAAEGTEPIEKIAPGVVWRKSVDQPVQTGLKSIDSMVPVGRGQRELIIGDRQTGKTAVAIDAIINQKGEDVICIYVAIGQKASSIANVVRKLEEVGAMAYTIVVVASASESAAMQYIAPYSGCTMGEYFRDKGQDALIVYDDLTKQAWAYRQISLLLRRPPGREAYPGDVFYLHSRLLERAARVNADYVEKATGGKVKGKTGSLTALPIIETQAGDVTAFVPTNVISITDGQIFLESDLFNAGIRPAINAGISVSRVGGAAQTKVIKKLGGGIRLALAQYRELAAFAQFASDLDEATRKQLERGKMATELMKQSQYATLKVSEMALTLFALNKGYFDDVDIKRALAFESALKSHIRSHHGAILDKIEASKELDAETEKALEAAIQEFKQNGTY.

ATP is bound at residue 169–176 (GDRQTGKT).

The protein belongs to the ATPase alpha/beta chains family. F-type ATPases have 2 components, CF(1) - the catalytic core - and CF(0) - the membrane proton channel. CF(1) has five subunits: alpha(3), beta(3), gamma(1), delta(1), epsilon(1). CF(0) has three main subunits: a(1), b(2) and c(9-12). The alpha and beta chains form an alternating ring which encloses part of the gamma chain. CF(1) is attached to CF(0) by a central stalk formed by the gamma and epsilon chains, while a peripheral stalk is formed by the delta and b chains.

Its subcellular location is the cell inner membrane. The enzyme catalyses ATP + H2O + 4 H(+)(in) = ADP + phosphate + 5 H(+)(out). Functionally, produces ATP from ADP in the presence of a proton gradient across the membrane. The alpha chain is a regulatory subunit. This is ATP synthase subunit alpha from Nitrosomonas europaea (strain ATCC 19718 / CIP 103999 / KCTC 2705 / NBRC 14298).